We begin with the raw amino-acid sequence, 100 residues long: Non-histone chromosomal protein HMG-14 (100 aa).

The tract at residues 1–100 (MPKRKVSSAE…EAGEKEAKSD (100 aa)) is disordered. Position 7 is an ADP-ribosylserine (Ser7). The residue at position 8 (Ser8) is a Phosphoserine. At Lys14 the chain carries N6-acetyllysine. Position 21 is a phosphoserine; by RPS6KA5 (Ser21). Position 25 is an ADP-ribosylserine; alternate (Ser25). Ser25 is modified (phosphoserine; alternate; by RPS6KA5). The residue at position 27 (Lys27) is an N6-acetyllysine. Basic and acidic residues-rich tracts occupy residues 30-50 (AKVE…DKKV) and 69-85 (ETKE…KTEE). Thr81 is subject to Phosphothreonine. Lys82 bears the N6-acetyllysine mark. 3 positions are modified to phosphoserine: Ser86, Ser89, and Ser99.

In terms of assembly, interacts with transcriptional regulator SEHBP. In terms of processing, phosphorylation on Ser-21 and Ser-25 weakens binding to nucleosomes and increases the rate of H3 phosphorylation. Phosphorylation favors cytoplasmic localization.

It localises to the nucleus. The protein localises to the cytoplasm. In terms of biological role, binds to the inner side of the nucleosomal DNA thus altering the interaction between the DNA and the histone octamer. May be involved in the process which maintains transcribable genes in a unique chromatin conformation. Inhibits the phosphorylation of nucleosomal histones H3 and H2A by RPS6KA5/MSK1 and RPS6KA3/RSK2. In Homo sapiens (Human), this protein is Non-histone chromosomal protein HMG-14 (HMGN1).